Consider the following 784-residue polypeptide: Toll-like receptor 2 (784 aa).

A signal peptide spans 1-20 (MPRALWTAWVWAVISVFTEG). At 21–587 (ASDQASSLSC…ARLSLSECHR (567 aa)) the chain is on the extracellular side. Cys30 and Cys36 form a disulfide bridge. LRR repeat units lie at residues 54–77 (VKSL…RCVN), 78–101 (LKTL…HLRN), 102–125 (LEYL…SLYV), 126–150 (LKFL…HLPN), 151–175 (LRTL…GLTF), 176–199 (LEEL…SIQN), 200–223 (ISHL…IVSS), 224–250 (LDYL…INTS), 251–278 (VKKL…YVSG), 279–308 (ILEV…YLGN), 309–337 (VETL…LTGK), 338–361 (VKRV…HLKS), 362–388 (LEYL…AWPV), 389–414 (LQTL…TLKN), 415–437 (LNNL…WPGK), 438–457 (MKQL…CLPQ), 458–478 (TLEI…ILPQ), 479–500 (LKEL…FLPV), and 501–524 (LSVM…SFPQ). N-linked (GlcNAc...) asparagine glycosylation occurs at Asn114. N-linked (GlcNAc...) asparagine glycosylation occurs at Asn199. An N-linked (GlcNAc...) asparagine glycan is attached at Asn248. Cys353 and Cys382 are oxidised to a cystine. Cys432 and Cys454 are oxidised to a cystine. Asn442 carries an N-linked (GlcNAc...) asparagine glycan. In terms of domain architecture, LRRCT spans 525-579 (LKALEAGGNNFICSCDFLSFAQGQQALARVLVDWPDGYRCDAPSHVRGQRVQDAR). A helical transmembrane segment spans residues 588 to 608 (AAVVSAVCCALFLLLLLTGVL). Over 609–784 (CHRFHGLWYM…WLNLRAAIRS (176 aa)) the chain is Cytoplasmic. In terms of domain architecture, TIR spans 639–782 (LCYDAFVSYS…AFWLNLRAAI (144 aa)). Lys754 participates in a covalent cross-link: Glycyl lysine isopeptide (Lys-Gly) (interchain with G-Cter in ubiquitin). The short motif at 761-778 (YLEWPTDETHREAFWLNL) is the ATG16L1-binding motif element.

The protein belongs to the Toll-like receptor family. Interacts with LY96, TLR1 and TLR6 (via extracellular domain). TLR2 seems to exist in heterodimers with either TLR1 or TLR6 before stimulation by the ligand. The heterodimers form bigger oligomers in response to their corresponding ligands as well as further heterotypic associations with other receptors such as CD14 and/or CD36. Binds MYD88 (via TIR domain). Interacts with TICAM1. Interacts with CNPY3. Interacts with ATG16L1. Interacts with PPP1R11. Interacts with TICAM2. Interacts with TIRAP. In terms of processing, ubiquitinated at Lys-754 by PPP1R11, leading to its degradation. Deubiquitinated by USP2. Glycosylation of Asn-442 is critical for secretion of the N-terminal ectodomain of TLR2.

It localises to the membrane. The protein localises to the cytoplasmic vesicle. Its subcellular location is the phagosome membrane. It is found in the membrane raft. Its function is as follows. Cooperates with LY96 to mediate the innate immune response to bacterial lipoproteins and other microbial cell wall components. Cooperates with TLR1 or TLR6 to mediate the innate immune response to bacterial lipoproteins or lipopeptides. Acts via MYD88 and TRAF6, leading to NF-kappa-B activation, cytokine secretion and the inflammatory response. May also promote apoptosis in response to lipoproteins. Forms activation clusters composed of several receptors depending on the ligand, these clusters trigger signaling from the cell surface and subsequently are targeted to the Golgi in a lipid-raft dependent pathway. Forms the cluster TLR2:TLR6:CD14:CD36 in response to diacylated lipopeptides and TLR2:TLR1:CD14 in response to triacylated lipopeptides. This is Toll-like receptor 2 (TLR2) from Ovis aries (Sheep).